Reading from the N-terminus, the 267-residue chain is uncharacterized protein (267 aa).

It belongs to the lin-8 family.

This is an uncharacterized protein from Caenorhabditis elegans.